The sequence spans 432 residues: Adenylosuccinate synthetase (432 aa).

Residues 13–19 (GDEGKGK) and 41–43 (GHT) each bind GTP. The Proton acceptor role is filled by D14. The Mg(2+) site is built by D14 and G41. Residues 14-17 (DEGK), 39-42 (NAGH), T130, R144, Q225, T240, and R304 each bind IMP. Catalysis depends on H42, which acts as the Proton donor. 300 to 306 (ATTGRRR) contributes to the substrate binding site. Residues R306, 332-334 (KLD), and 415-417 (STG) each bind GTP.

The protein belongs to the adenylosuccinate synthetase family. Homodimer. The cofactor is Mg(2+).

It localises to the cytoplasm. It carries out the reaction IMP + L-aspartate + GTP = N(6)-(1,2-dicarboxyethyl)-AMP + GDP + phosphate + 2 H(+). It participates in purine metabolism; AMP biosynthesis via de novo pathway; AMP from IMP: step 1/2. Plays an important role in the de novo pathway of purine nucleotide biosynthesis. Catalyzes the first committed step in the biosynthesis of AMP from IMP. This chain is Adenylosuccinate synthetase, found in Cronobacter sakazakii (strain ATCC BAA-894) (Enterobacter sakazakii).